The sequence spans 732 residues: MSTPDNHGKKAPQFAAFKPLTTVQNANDCCCDGACSSSPTLSENVSGTRYSWKVSGMDCAACARKVENAVRQLAGVNQVQVLFATEKLVVDADNDIRAQVESAVQKAGYSLRDEQAADEPQASRLKENLPLITLIVMMAISWGLEQFNHPFGQLAFIATTLVGLYPIARQALRLIKSGSYFAIETLMSVAAIGALFIGATAEAAMVLLLFLIGERLEGWAASRARQGVSALMALKPETATRLRNGEREEVAINSLRPGDVIEVAAGGRLPADGKLLSPFASFDESALTGESIPVERATGDKVPAGATSVDRLVTLEVLSEPGASAIDRILKLIEEAEERRAPIERFIDRFSRIYTPAIMAVALLVTLVPPLLFAASWQEWIYKGLTLLLIGCPCALVISTPAAITSGLAAAARRGALIKGGAALEQLGRVTQVAFDKTGTLTVGKPRVTAIHPATGISESELLTLAAAVEQGATHPLAQAIVREAQVAELAIPTAESQRALVGSGIEAQVNGERVLICAAGKHPADAFAGLINELESAGQTVVLVVRNDDVLGIIALQDTLRADAATAISELNALGVKGVILTGDNPRAAAAIAGELGLEFKAGLLPEDKVKAVTKLNQHAPLAMVGDGINDAPAMKAAAIGIAMGSGTDVALETADAALTHNHLRGLVQMIELARATHANIRQNITIALGLKGIFLVTTLLGMTGLWLAVLADTGATVLVTANALRLLRRR.

Residues 1–124 (MSTPDNHGKK…QAADEPQASR (124 aa)) lie on the Cytoplasmic side of the membrane. The region spanning 48-112 (TRYSWKVSGM…AVQKAGYSLR (65 aa)) is the HMA domain. Residues Asp58, Cys59, and Cys62 each contribute to the Zn(2+) site. A helical membrane pass occupies residues 125-145 (LKENLPLITLIVMMAISWGLE). Residue Gln146 is a topological domain, periplasmic. The helical transmembrane segment at 147–167 (FNHPFGQLAFIATTLVGLYPI) threads the bilayer. The Cytoplasmic segment spans residues 168–179 (ARQALRLIKSGS). Residues 180-197 (YFAIETLMSVAAIGALFI) form a helical membrane-spanning segment. At 198–202 (GATAE) the chain is on the periplasmic side. A helical transmembrane segment spans residues 203-222 (AAMVLLLFLIGERLEGWAAS). The Cytoplasmic segment spans residues 223 to 356 (RARQGVSALM…IDRFSRIYTP (134 aa)). The helical transmembrane segment at 357-377 (AIMAVALLVTLVPPLLFAASW) threads the bilayer. Topologically, residues 378-383 (QEWIYK) are periplasmic. The helical transmembrane segment at 384–404 (GLTLLLIGCPCALVISTPAAI) threads the bilayer. The Zn(2+) site is built by Cys392 and Cys394. At 405-685 (TSGLAAAARR…RATHANIRQN (281 aa)) the chain is on the cytoplasmic side. Catalysis depends on Asp436, which acts as the 4-aspartylphosphate intermediate. Residues Asp436, Thr438, and Asp628 each coordinate Mg(2+). A helical membrane pass occupies residues 686 to 702 (ITIALGLKGIFLVTTLL). Residues 703-707 (GMTGL) are Periplasmic-facing. The chain crosses the membrane as a helical span at residues 708-729 (WLAVLADTGATVLVTANALRLL). Asp714 contacts Zn(2+). At 730–732 (RRR) the chain is on the cytoplasmic side.

This sequence belongs to the cation transport ATPase (P-type) (TC 3.A.3) family. Type IB subfamily.

It is found in the cell inner membrane. It carries out the reaction Pb(2+)(in) + ATP + H2O = Pb(2+)(out) + ADP + phosphate + H(+). It catalyses the reaction Zn(2+)(in) + ATP + H2O = Zn(2+)(out) + ADP + phosphate + H(+). The enzyme catalyses Cd(2+)(in) + ATP + H2O = Cd(2+)(out) + ADP + phosphate + H(+). Its function is as follows. Confers resistance to zinc, cadmium and lead. Couples the hydrolysis of ATP with the export of zinc, cadmium or lead. The protein is Zinc/cadmium/lead-transporting P-type ATPase of Shigella sonnei (strain Ss046).